The primary structure comprises 131 residues: UPF0102 protein CYA_0708 (131 aa).

It belongs to the UPF0102 family.

This Synechococcus sp. (strain JA-3-3Ab) (Cyanobacteria bacterium Yellowstone A-Prime) protein is UPF0102 protein CYA_0708.